The primary structure comprises 218 residues: Protein GrpE (218 aa).

A compositionally biased stretch (polar residues) spans 1 to 10 (MSGEASTPAQ). Disordered stretches follow at residues 1-44 (MSGE…DPAE) and 198-218 (SMGP…AEDS). The span at 200-218 (GPGPSADAEGAASAEAEDS) shows a compositional bias: low complexity.

Belongs to the GrpE family. Homodimer.

Its subcellular location is the cytoplasm. Participates actively in the response to hyperosmotic and heat shock by preventing the aggregation of stress-denatured proteins, in association with DnaK and GrpE. It is the nucleotide exchange factor for DnaK and may function as a thermosensor. Unfolded proteins bind initially to DnaJ; upon interaction with the DnaJ-bound protein, DnaK hydrolyzes its bound ATP, resulting in the formation of a stable complex. GrpE releases ADP from DnaK; ATP binding to DnaK triggers the release of the substrate protein, thus completing the reaction cycle. Several rounds of ATP-dependent interactions between DnaJ, DnaK and GrpE are required for fully efficient folding. This chain is Protein GrpE, found in Parasynechococcus marenigrum (strain WH8102).